The primary structure comprises 265 residues: Type III pantothenate kinase (265 aa).

ATP is bound at residue 9 to 16; sequence DAGNSRIK. Residues Tyr96 and 103–106 each bind substrate; that span reads GSDR. Asp105 functions as the Proton acceptor in the catalytic mechanism. Thr129 provides a ligand contact to ATP. Thr189 is a substrate binding site.

The protein belongs to the type III pantothenate kinase family. In terms of assembly, homodimer. NH4(+) serves as cofactor. It depends on K(+) as a cofactor.

It localises to the cytoplasm. It catalyses the reaction (R)-pantothenate + ATP = (R)-4'-phosphopantothenate + ADP + H(+). It functions in the pathway cofactor biosynthesis; coenzyme A biosynthesis; CoA from (R)-pantothenate: step 1/5. Functionally, catalyzes the phosphorylation of pantothenate (Pan), the first step in CoA biosynthesis. The sequence is that of Type III pantothenate kinase from Burkholderia orbicola (strain AU 1054).